A 477-amino-acid polypeptide reads, in one-letter code: MKVTLPEFERAGVMVVGDVMLDRYWYGPTSRISPEAPVPVVKVNTIEERPGGAANVAMNIASLGANARLVGLTGIDDAARALSKSLADVNVKCDFVSVPTHPTITKLRVLSRNQQLIRLDFEEGFEGVDPQPLHERINQALSSIGALVLSDYAKGALASVQQMIQLARKAGVPVLIDPKGTDFERYRGATLLTPNLSEFEAVVGKCKTEEEIVERGMKLIADYELSALLVTRSEQGMSLLQPGKTPLHMPTQAQEVYDVTGAGDTVIGVLAATLAAGNSLEEACFFANAAAGVVVGKLGTSTVSPIELENAVRGRADTGFGVMTEEELKLAVAAARKRGEKVVMTNGVFDILHAGHVSYLANARKLGDRLIVAVNSDASTKRLKGDSRPVNPLEQRMIVLGALEAVDWVVSFEEDTPQRLIAGILPDLLVKGGDYKPEEIAGSKEVWANGGEVLVLNFEDGCSTTNIIKKIQQDKKG.

The ribokinase stretch occupies residues 1–318 (MKVTLPEFER…ENAVRGRADT (318 aa)). Lys179 bears the N6-acetyllysine mark. Residue 195–198 (NLSE) coordinates ATP. Asp264 is an active-site residue. Positions 344–477 (MTNGVFDILH…IKKIQQDKKG (134 aa)) are cytidylyltransferase.

In the N-terminal section; belongs to the carbohydrate kinase PfkB family. The protein in the C-terminal section; belongs to the cytidylyltransferase family. In terms of assembly, homodimer.

The enzyme catalyses D-glycero-beta-D-manno-heptose 7-phosphate + ATP = D-glycero-beta-D-manno-heptose 1,7-bisphosphate + ADP + H(+). It carries out the reaction D-glycero-beta-D-manno-heptose 1-phosphate + ATP + H(+) = ADP-D-glycero-beta-D-manno-heptose + diphosphate. It functions in the pathway nucleotide-sugar biosynthesis; ADP-L-glycero-beta-D-manno-heptose biosynthesis; ADP-L-glycero-beta-D-manno-heptose from D-glycero-beta-D-manno-heptose 7-phosphate: step 1/4. The protein operates within nucleotide-sugar biosynthesis; ADP-L-glycero-beta-D-manno-heptose biosynthesis; ADP-L-glycero-beta-D-manno-heptose from D-glycero-beta-D-manno-heptose 7-phosphate: step 3/4. In terms of biological role, catalyzes the phosphorylation of D-glycero-D-manno-heptose 7-phosphate at the C-1 position to selectively form D-glycero-beta-D-manno-heptose-1,7-bisphosphate. Its function is as follows. Catalyzes the ADP transfer from ATP to D-glycero-beta-D-manno-heptose 1-phosphate, yielding ADP-D-glycero-beta-D-manno-heptose. The chain is Bifunctional protein HldE from Escherichia coli O17:K52:H18 (strain UMN026 / ExPEC).